Reading from the N-terminus, the 60-residue chain is Venom protein 4.1 (60 aa).

Positions 1–26 (MKALCAILLVLFACSVMFEHFSISTA) are cleaved as a signal peptide.

It belongs to the non-disulfide-bridged peptide (NDBP) superfamily. As to expression, expressed by the venom gland.

The protein localises to the secreted. This Lychas mucronatus (Chinese swimming scorpion) protein is Venom protein 4.1.